Reading from the N-terminus, the 173-residue chain is NADH-quinone oxidoreductase subunit I 2 (173 aa).

2 consecutive 4Fe-4S ferredoxin-type domains span residues 41-73 (IVLT…LAKA) and 83-112 (EYFR…LTPD). The [4Fe-4S] cluster site is built by cysteine 53, cysteine 56, cysteine 59, cysteine 63, cysteine 92, cysteine 95, cysteine 98, and cysteine 102. Over residues 153-163 (GKDKGEAEHEA) the composition is skewed to basic and acidic residues. Residues 153–173 (GKDKGEAEHEAPPVNLKGLLP) form a disordered region.

This sequence belongs to the complex I 23 kDa subunit family. As to quaternary structure, NDH-1 is composed of 14 different subunits. Subunits NuoA, H, J, K, L, M, N constitute the membrane sector of the complex. Requires [4Fe-4S] cluster as cofactor.

The protein resides in the cell inner membrane. It catalyses the reaction a quinone + NADH + 5 H(+)(in) = a quinol + NAD(+) + 4 H(+)(out). In terms of biological role, NDH-1 shuttles electrons from NADH, via FMN and iron-sulfur (Fe-S) centers, to quinones in the respiratory chain. The immediate electron acceptor for the enzyme in this species is believed to be ubiquinone. Couples the redox reaction to proton translocation (for every two electrons transferred, four hydrogen ions are translocated across the cytoplasmic membrane), and thus conserves the redox energy in a proton gradient. The polypeptide is NADH-quinone oxidoreductase subunit I 2 (Rhodopseudomonas palustris (strain ATCC BAA-98 / CGA009)).